A 244-amino-acid polypeptide reads, in one-letter code: Agamous-like MADS-box protein MADS2 (244 aa).

In terms of domain architecture, MADS-box spans 1-61; the sequence is MGRGRVELKR…GKLYEFCSSS (61 aa). The K-box domain occupies 88–178; it reads EQSSYREYLK…TRKLDEISVK (91 aa).

Expressed in flowers and seeds.

Its subcellular location is the nucleus. Its function is as follows. Probable transcription factor involved in flower development. This is Agamous-like MADS-box protein MADS2 from Vitis vinifera (Grape).